A 293-amino-acid chain; its full sequence is ATP phosphoribosyltransferase (293 aa).

Belongs to the ATP phosphoribosyltransferase family. Long subfamily. Requires Mg(2+) as cofactor.

Its subcellular location is the cytoplasm. It carries out the reaction 1-(5-phospho-beta-D-ribosyl)-ATP + diphosphate = 5-phospho-alpha-D-ribose 1-diphosphate + ATP. It participates in amino-acid biosynthesis; L-histidine biosynthesis; L-histidine from 5-phospho-alpha-D-ribose 1-diphosphate: step 1/9. Its activity is regulated as follows. Feedback inhibited by histidine. In terms of biological role, catalyzes the condensation of ATP and 5-phosphoribose 1-diphosphate to form N'-(5'-phosphoribosyl)-ATP (PR-ATP). Has a crucial role in the pathway because the rate of histidine biosynthesis seems to be controlled primarily by regulation of HisG enzymatic activity. This is ATP phosphoribosyltransferase from Nitratidesulfovibrio vulgaris (strain DSM 19637 / Miyazaki F) (Desulfovibrio vulgaris).